A 287-amino-acid chain; its full sequence is MVCFSSLFVAASAIAVVFASPVDHEQLAKRQSTPSSQGTHDGYFYSWWTDGGAAATYTNLAGGEYSVSWSNGGNLVGGKGWNPGSARTITYSGTYNPNGNSYLAVYGWTRNPLVEYYVVENFGTYNPSSGATARGQVTHDGALYRLFESTRTNQPSIDGTATFQQYWAVRDVKRTGGTVNMATFFNAWTSAGMRLGTHNYQVVATEGYFSSGSARINVAGGGGSTPSPPSTPSPPTTPSPPPVTPPPSGGGSCAARWGQCGGSGWNGATCCSAGTCQAQNQWYSQCL.

An N-terminal signal peptide occupies residues 1 to 19 (MVCFSSLFVAASAIAVVFA). One can recognise a GH11 domain in the interval 31 to 219 (QSTPSSQGTH…SSGSARINVA (189 aa)). Glu-115 acts as the Nucleophile in catalysis. The active-site Proton donor is Glu-206. Positions 252–287 (SCAARWGQCGGSGWNGATCCSAGTCQAQNQWYSQCL) constitute a CBM1 domain.

The protein belongs to the glycosyl hydrolase 11 (cellulase G) family.

It carries out the reaction Endohydrolysis of (1-&gt;4)-beta-D-xylosidic linkages in xylans.. It participates in glycan degradation; xylan degradation. Functionally, endo-1,4-beta-xylanase involved in the hydrolysis of xylan, a major structural heterogeneous polysaccharide found in plant biomass representing the second most abundant polysaccharide in the biosphere, after cellulose. Exhibits immunity-inducing activity and induces cell death in Nicotiana benthamiana. This is Ethylene-inducing xylanase 3 from Verticillium longisporum (Verticillium dahliae var. longisporum).